The chain runs to 299 residues: Protein phosphatase 1 regulatory subunit 3D (299 aa).

A disordered region spans residues 1-22 (MSRGPSSAVLPSALGSRKLGPR). A phosphoserine mark is found at S23, S25, and S28. The tract at residues 37–94 (EPRACRPPGSPGRAPPPTPAPSGCDPRLRPIILRRARSLPSSPERRQKAAGAPGAACR) is disordered. The segment covering 44–56 (PGSPGRAPPPTPA) has biased composition (pro residues). Residues 57 to 67 (PSGCDPRLRPI) are compositionally biased toward low complexity. S74 carries the phosphoserine modification. Residues 85-94 (AAGAPGAACR) are compositionally biased toward low complexity. Positions 101–104 (LRVR) match the PP1-binding motif motif. S133 bears the Phosphoserine mark. Residues 169–278 (GERLQRQLVC…NNDHRDYSLT (110 aa)) form the CBM21 domain.

In terms of assembly, interacts with PPP1CC catalytic subunit of PP1, and associates with glycogen. Interacts with EPM2A; in the presence of NHLC1/malin the interaction leads to PPP1R3D ubiquitination and autophagic degradation. In terms of tissue distribution, expressed in all tissues tested. High expression in skeletal muscle and heart.

In terms of biological role, seems to act as a glycogen-targeting subunit for PP1. PP1 is essential for cell division, and participates in the regulation of glycogen metabolism, muscle contractility and protein synthesis. This chain is Protein phosphatase 1 regulatory subunit 3D (PPP1R3D), found in Homo sapiens (Human).